The chain runs to 257 residues: 24 kDa outer membrane protein (257 aa).

The signal sequence occupies residues 1–21 (MKNKSKLLACCLMALPISSFS).

The protein belongs to the MipA/OmpV family.

Its subcellular location is the cell outer membrane. The chain is 24 kDa outer membrane protein from Pasteurella multocida (strain Pm70).